Reading from the N-terminus, the 257-residue chain is 1-(5-phosphoribosyl)-5-[(5-phosphoribosylamino)methylideneamino] imidazole-4-carboxamide isomerase (257 aa).

Asp-8 acts as the Proton acceptor in catalysis. Asp-129 (proton donor) is an active-site residue.

It belongs to the HisA/HisF family.

The protein localises to the cytoplasm. It carries out the reaction 1-(5-phospho-beta-D-ribosyl)-5-[(5-phospho-beta-D-ribosylamino)methylideneamino]imidazole-4-carboxamide = 5-[(5-phospho-1-deoxy-D-ribulos-1-ylimino)methylamino]-1-(5-phospho-beta-D-ribosyl)imidazole-4-carboxamide. Its pathway is amino-acid biosynthesis; L-histidine biosynthesis; L-histidine from 5-phospho-alpha-D-ribose 1-diphosphate: step 4/9. This chain is 1-(5-phosphoribosyl)-5-[(5-phosphoribosylamino)methylideneamino] imidazole-4-carboxamide isomerase, found in Trichormus variabilis (strain ATCC 29413 / PCC 7937) (Anabaena variabilis).